A 95-amino-acid chain; its full sequence is Co-chaperonin GroES (95 aa).

This sequence belongs to the GroES chaperonin family. In terms of assembly, heptamer of 7 subunits arranged in a ring. Interacts with the chaperonin GroEL.

The protein localises to the cytoplasm. In terms of biological role, together with the chaperonin GroEL, plays an essential role in assisting protein folding. The GroEL-GroES system forms a nano-cage that allows encapsulation of the non-native substrate proteins and provides a physical environment optimized to promote and accelerate protein folding. GroES binds to the apical surface of the GroEL ring, thereby capping the opening of the GroEL channel. The sequence is that of Co-chaperonin GroES from Dichelobacter nodosus (strain VCS1703A).